The sequence spans 303 residues: MATSRYEPVAEIGVGAYGTVYKARDPHSGHFVALKSVRVPNGGGAGGGLPISTVREVALLRRLEAFEHPNVVRLMDVCATARTDRETKVTLVFEHVDQDLRTYLDKAPPPGLPVETIKDLMRQFLRGLDFLHANCIVHRDLKPENILVTSGGTVKLADFGLARIYSYQMALTPVVVTLWYRAPEVLLQSTYATPVDMWSVGCIFAEMFRRKPLFCGNSEADQLGKIFDLIGLPPEDDWPRDVSLPRGAFSPRGPRPVQSVVPEMEESGAQLLLEMLTFNPHKRISAFRALQHSYLHKAEGNPE.

Alanine 2 bears the N-acetylalanine mark. The region spanning 6 to 295 is the Protein kinase domain; sequence YEPVAEIGVG…AFRALQHSYL (290 aa). ATP contacts are provided by residues 12–20 and lysine 35; that span reads IGVGAYGTV. The segment at 50–56 is required for binding D-type cyclins; sequence PISTVRE. Aspartate 140 acts as the Proton acceptor in catalysis. Threonine 172 bears the Phosphothreonine; by CAK mark.

Belongs to the protein kinase superfamily. CMGC Ser/Thr protein kinase family. CDC2/CDKX subfamily. In terms of assembly, component of the D-CDK4 complex, composed of CDK4 and some D-type G1 cyclin (CCND1, CCND2 or CCND3). Interacts directly in the complex with CCND1, CCND2 or CCND3. Interacts with SEI1 and ZNF655. Forms a ternary complex, cyclin D-CDK4-CDKN1B, involved in modulating CDK4 enzymatic activity. Interacts directly with CDKN1B (phosphorylated on 'Tyr-88' and 'Tyr-89'); the interaction allows assembly of the cyclin D-CDK4 complex, Thr-172 phosphorylation, nuclear translocation and enhances the cyclin D-CDK4 complex activity. CDK4 activity is either inhibited or enhanced depending on stoichiometry of complex. The non-tyrosine-phosphorylated form of CDKN1B prevents T-loop phosphorylation of CDK4 producing inactive CDK4. Interacts (unphosphorylated form) with CDK2. Also forms ternary complexes with CDKN1A or CDKN2A. Interacts directly with CDKN1A (via its N-terminal); the interaction promotes the assembly of the cyclin D-CDK4 complex, its nuclear translocation and promotes the cyclin D-dependent enzyme activity of CDK4. Interacts with CCND1; the interaction is prevented with the binding of CCND1 to INSM1 during cell cycle progression. Probably forms a complex composed of chaperones HSP90 and HSP70, co-chaperones CDC37, PPP5C, TSC1 and client protein TSC2, CDK4, AKT, RAF1 and NR3C1; this complex does not contain co-chaperones STIP1/HOP and PTGES3/p23. Interacts with CEBPA (when phosphorylated). Interacts with FNIP1 and FNIP2. Post-translationally, phosphorylation at Thr-172 is required for enzymatic activity. Phosphorylated, in vitro, at this site by CCNH-CDK7, but, in vivo, appears to be phosphorylated by a proline-directed kinase. In the cyclin D-CDK4-CDKN1B complex, this phosphorylation and consequent CDK4 enzyme activity, is dependent on the tyrosine phosphorylation state of CDKN1B. Thus, in proliferating cells, CDK4 within the complex is phosphorylated on Thr-172 in the T-loop. In resting cells, phosphorylation on Thr-172 is prevented by the non-tyrosine-phosphorylated form of CDKN1B.

The protein localises to the cytoplasm. It is found in the nucleus. Its subcellular location is the nucleus membrane. It carries out the reaction L-seryl-[protein] + ATP = O-phospho-L-seryl-[protein] + ADP + H(+). It catalyses the reaction L-threonyl-[protein] + ATP = O-phospho-L-threonyl-[protein] + ADP + H(+). With respect to regulation, both phosphorylation at Thr-172 and binding of a D-type cyclin are necessary for enzymatic activity. Full activation of the cyclin-D-CDK4 complex appears to require other factors such as recruitment of the substrate via a substrate recruitment motif, and/or formation of the CDKN1B ternary complex. Inhibited by INK4 family members. In resting cells, the non-tyrosine-phosphorylated form of CDKN1B prevents phosphorylation at Thr-172 and inactivation, while, in proliferating cells, tyrosine phosphorylation of CDKN1B allows phosphorylation of Thr-172 of CDK4 and subsequent activation. Ser/Thr-kinase component of cyclin D-CDK4 (DC) complexes that phosphorylate and inhibit members of the retinoblastoma (RB) protein family including RB1 and regulate the cell-cycle during G(1)/S transition. Phosphorylation of RB1 allows dissociation of the transcription factor E2F from the RB/E2F complexes and the subsequent transcription of E2F target genes which are responsible for the progression through the G(1) phase. Hypophosphorylates RB1 in early G(1) phase. Cyclin D-CDK4 complexes are major integrators of various mitogenenic and antimitogenic signals. Also phosphorylates SMAD3 in a cell-cycle-dependent manner and represses its transcriptional activity. Component of the ternary complex, cyclin D/CDK4/CDKN1B, required for nuclear translocation and activity of the cyclin D-CDK4 complex. The chain is Cyclin-dependent kinase 4 (CDK4) from Sus scrofa (Pig).